Here is a 192-residue protein sequence, read N- to C-terminus: Small ribosomal subunit protein eS7 (192 aa).

The protein belongs to the eukaryotic ribosomal protein eS7 family.

This Secale cereale (Rye) protein is Small ribosomal subunit protein eS7 (RPS7).